A 63-amino-acid chain; its full sequence is AZLGFZGFVMSDWAAHHAGVSGALAGLBMGSMPGBVBYBSGTSYWGTNLTISLWVNGTVPZWR.

Asp-12 is a catalytic residue. Asn-48 and Asn-56 each carry an N-linked (GlcNAc...) asparagine glycan.

It belongs to the glycosyl hydrolase 3 family.

The catalysed reaction is Hydrolysis of terminal, non-reducing beta-D-glucosyl residues with release of beta-D-glucose.. The protein operates within glycan metabolism; cellulose degradation. This chain is Beta-glucosidase A-3, found in Aspergillus wentii.